Here is a 477-residue protein sequence, read N- to C-terminus: Protoporphyrinogen oxidase (477 aa).

Residues 9–14 (GGGISG), W42, 57–60 (GPRG), V257, A449, and 454–456 (VAV) contribute to the FAD site.

Belongs to the protoporphyrinogen/coproporphyrinogen oxidase family. Protoporphyrinogen oxidase subfamily. Monomer. Homodimer. Requires FAD as cofactor.

It localises to the mitochondrion inner membrane. It carries out the reaction protoporphyrinogen IX + 3 O2 = protoporphyrin IX + 3 H2O2. Its pathway is porphyrin-containing compound metabolism; protoporphyrin-IX biosynthesis; protoporphyrin-IX from protoporphyrinogen-IX: step 1/1. Its activity is regulated as follows. Inhibited by acifluorfen. Its function is as follows. Catalyzes the 6-electron oxidation of protoporphyrinogen-IX to form protoporphyrin-IX. This Mus musculus (Mouse) protein is Protoporphyrinogen oxidase (Ppox).